The sequence spans 335 residues: Tetraacyldisaccharide 4'-kinase (335 aa).

51–58 (HVGGAGKT) serves as a coordination point for ATP.

Belongs to the LpxK family.

The enzyme catalyses a lipid A disaccharide + ATP = a lipid IVA + ADP + H(+). It functions in the pathway glycolipid biosynthesis; lipid IV(A) biosynthesis; lipid IV(A) from (3R)-3-hydroxytetradecanoyl-[acyl-carrier-protein] and UDP-N-acetyl-alpha-D-glucosamine: step 6/6. Functionally, transfers the gamma-phosphate of ATP to the 4'-position of a tetraacyldisaccharide 1-phosphate intermediate (termed DS-1-P) to form tetraacyldisaccharide 1,4'-bis-phosphate (lipid IVA). The protein is Tetraacyldisaccharide 4'-kinase of Bradyrhizobium sp. (strain ORS 278).